The chain runs to 392 residues: MTLAAITYTRGSLSILNQLLLPHQTTYDPLHSACDAWHAIHEMRVRGAPAIAIVAALSLAVELDALAANNQLSPEPKEVEVFIREKLEYLVSSRPTAVNLAEAAGRLGGIVSAKAEVRGVDGREVAEAYIAAAQRMLEDDVKDNRAIGEFGARWVLENGVATGSESGSEKGKVAVLTHCNTGSLATAGYGTALGVIRSLHATGSLERAYCTETRPYNQGSRLTAYELVHDKIPATLITDNMAAALLARNRAGSAASVGVSAIIVGADRVAANGDTANKIGTYGLAVLAKYHGVKFLVAAPRTTIDMNTKTGADIVIEERPKQEVTRVRGPRAGEEVDGLRAMETITVAANGIDVWNPAFDVTPAALIDGIITEVGVVEKDASGAFHLARIFE.

The Proton donor role is filled by aspartate 267.

The protein belongs to the eIF-2B alpha/beta/delta subunits family. MtnA subfamily.

It localises to the cytoplasm. Its subcellular location is the nucleus. It carries out the reaction 5-(methylsulfanyl)-alpha-D-ribose 1-phosphate = 5-(methylsulfanyl)-D-ribulose 1-phosphate. It functions in the pathway amino-acid biosynthesis; L-methionine biosynthesis via salvage pathway; L-methionine from S-methyl-5-thio-alpha-D-ribose 1-phosphate: step 1/6. In terms of biological role, catalyzes the interconversion of methylthioribose-1-phosphate (MTR-1-P) into methylthioribulose-1-phosphate (MTRu-1-P). The chain is Methylthioribose-1-phosphate isomerase from Ajellomyces dermatitidis (strain ER-3 / ATCC MYA-2586) (Blastomyces dermatitidis).